A 156-amino-acid chain; its full sequence is NAD(P)H-quinone oxidoreductase subunit N (156 aa).

This sequence belongs to the complex I NdhN subunit family. NDH-1 can be composed of about 15 different subunits; different subcomplexes with different compositions have been identified which probably have different functions.

It is found in the cellular thylakoid membrane. The catalysed reaction is a plastoquinone + NADH + (n+1) H(+)(in) = a plastoquinol + NAD(+) + n H(+)(out). It catalyses the reaction a plastoquinone + NADPH + (n+1) H(+)(in) = a plastoquinol + NADP(+) + n H(+)(out). In terms of biological role, NDH-1 shuttles electrons from an unknown electron donor, via FMN and iron-sulfur (Fe-S) centers, to quinones in the respiratory and/or the photosynthetic chain. The immediate electron acceptor for the enzyme in this species is believed to be plastoquinone. Couples the redox reaction to proton translocation, and thus conserves the redox energy in a proton gradient. Cyanobacterial NDH-1 also plays a role in inorganic carbon-concentration. The chain is NAD(P)H-quinone oxidoreductase subunit N from Prochlorococcus marinus (strain MIT 9515).